Consider the following 141-residue polypeptide: Lutropin subunit beta (141 aa).

The signal sequence occupies residues 1 to 21 (MERYQELTVLLLLLLLEGGSG). 6 cysteine pairs are disulfide-bonded: cysteine 30/cysteine 78, cysteine 44/cysteine 93, cysteine 47/cysteine 131, cysteine 55/cysteine 109, cysteine 59/cysteine 111, and cysteine 114/cysteine 121. N-linked (GlcNAc...) asparagine glycosylation occurs at asparagine 34.

Belongs to the glycoprotein hormones subunit beta family. In terms of assembly, heterodimer of a common alpha chain and a unique beta chain which confers biological specificity to thyrotropin, lutropin, follitropin and gonadotropin.

It localises to the secreted. In terms of biological role, promotes spermatogenesis and ovulation by stimulating the testes and ovaries to synthesize steroids. This chain is Lutropin subunit beta (LHB), found in Monodelphis domestica (Gray short-tailed opossum).